Here is a 1151-residue protein sequence, read N- to C-terminus: Calcium-activated potassium channel subunit alpha-1 (1151 aa).

Positions 1–36 (MSSNIHANHLSLDASSSSSSSSSSSSSSSSSSSVHE) are disordered. Residues 1–59 (MSSNIHANHLSLDASSSSSSSSSSSSSSSSSSSVHEPKMDALIIPVTMEVPCDSRGQRM) are Extracellular-facing. The segment covering 15 to 33 (SSSSSSSSSSSSSSSSSSS) has biased composition (low complexity). Residues 60–80 (WWAFLASSMVTFFGGLFIILL) traverse the membrane as a helical segment. Residues 81–151 (WRTLKYLWTV…MISAQTLTGR (71 aa)) lie on the Cytoplasmic side of the membrane. Residues C91, C92, and C94 are each lipidated (S-palmitoyl cysteine). A helical membrane pass occupies residues 152-172 (VLVVLVFALSIGALVIYFIDS). Topologically, residues 173-187 (SNPIESCQNFYKDFT) are extracellular. A helical membrane pass occupies residues 188-208 (LQIDMAFNVFFLLYFGLRFIA). Residues 209-212 (ANDK) are Cytoplasmic-facing. A helical membrane pass occupies residues 213–233 (LWFWLEVNSVVDFFTVPPVFV). At 234–237 (SVYL) the chain is on the extracellular side. Residues 238 to 258 (NRSWLGLRFLRALRLIQFSEI) form a helical; Voltage-sensor membrane-spanning segment. Residues 259–273 (LQFLNILKTSNSIKL) are Cytoplasmic-facing. A helical transmembrane segment spans residues 274-294 (VNLLSIFISTWLTAAGFIHLV). Residues 295–308 (ENSGDPWENFQNNQ) lie on the Extracellular side of the membrane. Positions 309 to 331 (ALTYWECVYLLMVTMSTVGYGDV) form an intramembrane region, pore-forming. Positions 325 to 328 (TVGY) match the Selectivity for potassium motif. Topologically, residues 332–340 (YAKTTLGRL) are extracellular. Residues 341–361 (FMVFFILGGLAMFASYVPEII) traverse the membrane as a helical segment. Over 362–1151 (ELIGNRKKYG…KQKYVQEERL (790 aa)) the chain is Cytoplasmic. In terms of domain architecture, RCK N-terminal 1 spans 380 to 522 (RKHIVVCGHI…WNWKEGDDAI (143 aa)). 3 residues coordinate Mg(2+): E412, Q435, and E437. The interval 529-549 (LGFIAQSCLAQGLSTMLANLF) is segment S7. The tract at residues 586–606 (LSFPTVCELCFVKLKLLMIAI) is segment S8. A heme-binding motif region spans residues 650–654 (CKACH). A disordered region spans residues 674 to 702 (EQPSTLSPKKKQRNGGMRNSPNSSPKLMR). A Phosphothreonine modification is found at T678. Residues S680, S693, and S697 each carry the phosphoserine modification. Positions 752–772 (VLSGHVVVCIFGDVSSALIGL) are segment S9. An RCK N-terminal 2 domain is found at 754–898 (SGHVVVCIFG…MDRSSPDNSP (145 aa)). T885 is subject to Phosphothreonine. 2 positions are modified to phosphoserine: S893 and S897. The Calcium bowl motif lies at 918–940 (TELVNDTNVQFLDQDDDDDPDTE). 4 residues coordinate Ca(2+): Q927, D930, D933, and D935. The interval 947–967 (FACGTAFAVSVLDSLMSATYF) is segment S10. The span at 1101–1126 (RASLSHSSHSSQSSSKKSSSVHSIPS) shows a compositional bias: low complexity. A disordered region spans residues 1101-1151 (RASLSHSSHSSQSSSKKSSSVHSIPSTANRQNRPKSRESRDKQKYVQEERL). The span at 1135 to 1151 (KSRESRDKQKYVQEERL) shows a compositional bias: basic and acidic residues. A phosphoserine mark is found at S1136 and S1139.

Belongs to the potassium channel family. Calcium-activated (TC 1.A.1.3) subfamily. KCa1.1/KCNMA1 sub-subfamily. In terms of assembly, homotetramer; which constitutes the calcium-activated potassium channel. Interacts with beta subunits KCNMB1, KCNMB2, KCNMB3 and KCNMB4. Interacts with gamma subunits LRRC26, LRRC38, LRRC52 and LRRC55. Beta and gamma subunits are accessory, and modulate its activity. Interacts with RAB11B. Phosphorylated. Phosphorylation by kinases such as PKA and/or PKG. In smooth muscles, phosphorylation affects its activity. In terms of processing, palmitoylation by ZDHHC22 and ZDHHC23 within the intracellular linker between the S0 and S1 transmembrane domains regulates localization to the plasma membrane. Depalmitoylated by LYPLA1 and LYPLAL1, leading to retard exit from the trans-Golgi network.

The protein resides in the cell membrane. It catalyses the reaction K(+)(in) = K(+)(out). Ethanol and carbon monoxide-bound heme increase channel activation. Heme inhibits channel activation. Its function is as follows. Potassium channel activated by both membrane depolarization or increase in cytosolic Ca(2+) that mediates export of K(+). It is also activated by the concentration of cytosolic Mg(2+). Its activation dampens the excitatory events that elevate the cytosolic Ca(2+) concentration and/or depolarize the cell membrane. It therefore contributes to repolarization of the membrane potential. Plays a key role in controlling excitability in a number of systems, such as regulation of the contraction of smooth muscle, the tuning of hair cells in the cochlea, regulation of transmitter release, and innate immunity. In smooth muscles, its activation by high level of Ca(2+), caused by ryanodine receptors in the sarcoplasmic reticulum, regulates the membrane potential. In cochlea cells, its number and kinetic properties partly determine the characteristic frequency of each hair cell and thereby helps to establish a tonotopic map. Kinetics of KCNMA1 channels are determined by alternative splicing, phosphorylation status and its combination with modulating beta subunits. Highly sensitive to both iberiotoxin (IbTx) and charybdotoxin (CTX). The protein is Calcium-activated potassium channel subunit alpha-1 (KCNMA1) of Macaca mulatta (Rhesus macaque).